We begin with the raw amino-acid sequence, 237 residues long: Purine nucleoside phosphorylase DeoD-type (237 aa).

His5 contacts a purine D-ribonucleoside. Phosphate-binding positions include Gly21, Arg25, Arg44, and 88–91 (RVGS). A purine D-ribonucleoside is bound by residues 180-182 (EME) and 204-205 (SD). Asp205 acts as the Proton donor in catalysis.

Belongs to the PNP/UDP phosphorylase family. In terms of assembly, homohexamer; trimer of homodimers.

It carries out the reaction a purine D-ribonucleoside + phosphate = a purine nucleobase + alpha-D-ribose 1-phosphate. The catalysed reaction is a purine 2'-deoxy-D-ribonucleoside + phosphate = a purine nucleobase + 2-deoxy-alpha-D-ribose 1-phosphate. Catalyzes the reversible phosphorolytic breakdown of the N-glycosidic bond in the beta-(deoxy)ribonucleoside molecules, with the formation of the corresponding free purine bases and pentose-1-phosphate. The chain is Purine nucleoside phosphorylase DeoD-type from Edwardsiella ictaluri (strain 93-146).